Here is a 652-residue protein sequence, read N- to C-terminus: DNA ligase (652 aa).

NAD(+) contacts are provided by residues 29–33 (DQEYD), 78–79 (SL), and Glu-107. The N6-AMP-lysine intermediate role is filled by Lys-109. The NAD(+) site is built by Arg-130, Glu-164, Lys-278, and Lys-302. Zn(2+)-binding residues include Cys-395, Cys-398, Cys-413, and Cys-418. Residues 577–652 (DTSAQLFGLT…VKDENWLLQL (76 aa)) form the BRCT domain.

Belongs to the NAD-dependent DNA ligase family. LigA subfamily. The cofactor is Mg(2+). It depends on Mn(2+) as a cofactor.

It carries out the reaction NAD(+) + (deoxyribonucleotide)n-3'-hydroxyl + 5'-phospho-(deoxyribonucleotide)m = (deoxyribonucleotide)n+m + AMP + beta-nicotinamide D-nucleotide.. Its function is as follows. DNA ligase that catalyzes the formation of phosphodiester linkages between 5'-phosphoryl and 3'-hydroxyl groups in double-stranded DNA using NAD as a coenzyme and as the energy source for the reaction. It is essential for DNA replication and repair of damaged DNA. The protein is DNA ligase of Streptococcus uberis (strain ATCC BAA-854 / 0140J).